Consider the following 398-residue polypeptide: Peptidyl-prolyl cis-trans isomerase D (398 aa).

A PPIase cyclophilin-type domain is found at 21-185 (FGSSPASRPG…EDVKIVDCGE (165 aa)). 3 TPR repeats span residues 229–262 (GLAL…LQLH), 282–323 (TSIQ…PSTE), and 335–368 (AKAF…APED).

It belongs to the cyclophilin-type PPIase family. PPIase D subfamily.

Its subcellular location is the cytoplasm. The catalysed reaction is [protein]-peptidylproline (omega=180) = [protein]-peptidylproline (omega=0). In terms of biological role, PPIases accelerate the folding of proteins. It catalyzes the cis-trans isomerization of proline imidic peptide bonds in oligopeptides. This chain is Peptidyl-prolyl cis-trans isomerase D (CPR6), found in Mycosarcoma maydis (Corn smut fungus).